The sequence spans 318 residues: Very-long-chain 3-oxoacyl-CoA reductase-B (318 aa).

A helical membrane pass occupies residues 15-35 (FWYLGVVAATWWGLRAAWCLL). 54–83 (GKWAVVTGATDGIGKAYAEELARRGMNIVL) provides a ligand contact to NADP(+). 2 helical membrane-spanning segments follow: residues 187-207 (GVVL…LTVY) and 281-301 (AITG…SMGM). Position 194 (S194) interacts with substrate. Y207 acts as the Proton acceptor in catalysis.

The protein belongs to the short-chain dehydrogenases/reductases (SDR) family. 17-beta-HSD 3 subfamily.

It is found in the endoplasmic reticulum membrane. It carries out the reaction a very-long-chain (3R)-3-hydroxyacyl-CoA + NADP(+) = a very-long-chain 3-oxoacyl-CoA + NADPH + H(+). The enzyme catalyses 17beta-estradiol + NAD(+) = estrone + NADH + H(+). The catalysed reaction is 17beta-estradiol + NADP(+) = estrone + NADPH + H(+). It participates in lipid metabolism; fatty acid biosynthesis. It functions in the pathway steroid biosynthesis; estrogen biosynthesis. Catalyzes the second of the four reactions of the long-chain fatty acids elongation cycle. This endoplasmic reticulum-bound enzymatic process, allows the addition of two carbons to the chain of long- and very long-chain fatty acids/VLCFAs per cycle. This enzyme has a 3-ketoacyl-CoA reductase activity, reducing 3-ketoacyl-CoA to 3-hydroxyacyl-CoA, within each cycle of fatty acid elongation. Thereby, it may participate in the production of VLCFAs of different chain lengths that are involved in multiple biological processes as precursors of membrane lipids and lipid mediators. May also catalyze the transformation of estrone (E1) into estradiol (E2) and play a role in estrogen formation. The sequence is that of Very-long-chain 3-oxoacyl-CoA reductase-B (hsd17b12-b) from Xenopus laevis (African clawed frog).